The following is a 103-amino-acid chain: Auxin-responsive protein SAUR50 (103 aa).

It belongs to the ARG7 family.

In terms of biological role, effector of hormonal and environmental signals in plant growth. Involved in heliotropism. The protein is Auxin-responsive protein SAUR50 of Helianthus annuus (Common sunflower).